A 316-amino-acid chain; its full sequence is Acetyl-coenzyme A carboxylase carboxyl transferase subunit alpha (316 aa).

In terms of domain architecture, CoA carboxyltransferase C-terminal spans 36–290; sequence PLRTQLETLR…GSVISRHLDD (255 aa).

It belongs to the AccA family. In terms of assembly, acetyl-CoA carboxylase is a heterohexamer composed of biotin carboxyl carrier protein (AccB), biotin carboxylase (AccC) and two subunits each of ACCase subunit alpha (AccA) and ACCase subunit beta (AccD).

Its subcellular location is the cytoplasm. It carries out the reaction N(6)-carboxybiotinyl-L-lysyl-[protein] + acetyl-CoA = N(6)-biotinyl-L-lysyl-[protein] + malonyl-CoA. It functions in the pathway lipid metabolism; malonyl-CoA biosynthesis; malonyl-CoA from acetyl-CoA: step 1/1. Component of the acetyl coenzyme A carboxylase (ACC) complex. First, biotin carboxylase catalyzes the carboxylation of biotin on its carrier protein (BCCP) and then the CO(2) group is transferred by the carboxyltransferase to acetyl-CoA to form malonyl-CoA. The protein is Acetyl-coenzyme A carboxylase carboxyl transferase subunit alpha of Deinococcus radiodurans (strain ATCC 13939 / DSM 20539 / JCM 16871 / CCUG 27074 / LMG 4051 / NBRC 15346 / NCIMB 9279 / VKM B-1422 / R1).